We begin with the raw amino-acid sequence, 130 residues long: Small ribosomal subunit protein uS8 (130 aa).

It belongs to the universal ribosomal protein uS8 family. In terms of assembly, part of the 30S ribosomal subunit.

In terms of biological role, one of the primary rRNA binding proteins, it binds directly to 16S rRNA central domain where it helps coordinate assembly of the platform of the 30S subunit. The chain is Small ribosomal subunit protein uS8 from Methanosarcina mazei (strain ATCC BAA-159 / DSM 3647 / Goe1 / Go1 / JCM 11833 / OCM 88) (Methanosarcina frisia).